A 276-amino-acid polypeptide reads, in one-letter code: Undecaprenyl-diphosphatase 2 (276 aa).

8 consecutive transmembrane segments (helical) span residues 1–21 (MSLW…LFPV), 44–64 (QLLP…LWYF), 87–107 (GHLM…GLLL), 114–134 (VFHD…LLWL), 150–170 (MTFK…IPGF), 190–210 (AAEF…VLEL), 222–242 (DALL…RFLM), and 251–271 (LASF…WFML).

Belongs to the UppP family.

The protein resides in the cell inner membrane. The catalysed reaction is di-trans,octa-cis-undecaprenyl diphosphate + H2O = di-trans,octa-cis-undecaprenyl phosphate + phosphate + H(+). In terms of biological role, catalyzes the dephosphorylation of undecaprenyl diphosphate (UPP). Confers resistance to bacitracin. The sequence is that of Undecaprenyl-diphosphatase 2 from Burkholderia orbicola (strain AU 1054).